Here is a 601-residue protein sequence, read N- to C-terminus: uncharacterized protein (601 aa).

The next 3 membrane-spanning stretches (helical) occupy residues 74 to 94 (IFFF…VFSI), 104 to 124 (VSFL…PNDG), and 531 to 551 (LVLL…NYYY).

It localises to the endoplasmic reticulum membrane. This is an uncharacterized protein from Schizosaccharomyces pombe (strain 972 / ATCC 24843) (Fission yeast).